A 164-amino-acid polypeptide reads, in one-letter code: Peptide methionine sulfoxide reductase MsrA (164 aa).

Cys-16 is a catalytic residue.

Belongs to the MsrA Met sulfoxide reductase family.

The enzyme catalyses L-methionyl-[protein] + [thioredoxin]-disulfide + H2O = L-methionyl-(S)-S-oxide-[protein] + [thioredoxin]-dithiol. It catalyses the reaction [thioredoxin]-disulfide + L-methionine + H2O = L-methionine (S)-S-oxide + [thioredoxin]-dithiol. Functionally, has an important function as a repair enzyme for proteins that have been inactivated by oxidation. Catalyzes the reversible oxidation-reduction of methionine sulfoxide in proteins to methionine. In Clostridium tetani (strain Massachusetts / E88), this protein is Peptide methionine sulfoxide reductase MsrA.